A 370-amino-acid chain; its full sequence is MKIKDAKKPSFPWFGMDIGGTLVKLSYFEPIDITAEEEQEEVESLKSIRKYLTSNVAYGSTGIRDVHLELKDLTLFGRRGNLHFIRFPTQDLPTFIQMGRDKNFSTLHTVLCATGGGAYKFEKDFRTIGNLHLHKLDELDCLVKGLLYIDSVSFNGQAECYYFANASEPERCQKMPFNLDDPYPLLVVNIGSGVSILAVHSKDNYKRVTGTSLGGGTFLGLCSLLTGCESFEEALEMASKGDSTQADKLVRDIYGGDYERFGLPGWAVASSFGNMIYKEKRESVSKEDLARATLVTITNNIGSIARMCAVNEKINRVVFVGNFLRVNTLSMKLLAYALDYWSKGQLKALFLEHEGYFGAVGALLGLPNFS.

The active-site Proton acceptor is the E138. Acetyl-CoA is bound by residues S192, S195, and R207.

Belongs to the type II pantothenate kinase family. As to quaternary structure, homodimer.

It localises to the cytoplasm. The catalysed reaction is (R)-pantothenate + ATP = (R)-4'-phosphopantothenate + ADP + H(+). Its pathway is cofactor biosynthesis; coenzyme A biosynthesis; CoA from (R)-pantothenate: step 1/5. Subject to allosteric regulation, exists in two distinct conformational states, a catalytically incompetent (or open) conformation stabilized by the binding of acetyl(acyl)-CoA, and a catalytically competent (or closed) conformation stabilized by ATP-binding. Inhibited by acetyl-CoA and its thioesters which act as allosteric inhibitors and compete with the ATP-binding site. Its function is as follows. Catalyzes the phosphorylation of pantothenate to generate 4'-phosphopantothenate in the first and rate-determining step of coenzyme A (CoA) synthesis. In Bos taurus (Bovine), this protein is Pantothenate kinase 3 (PANK3).